The chain runs to 723 residues: Polyribonucleotide nucleotidyltransferase (723 aa).

Mg(2+) contacts are provided by aspartate 488 and aspartate 494. Positions 555 to 614 constitute a KH domain; the sequence is PRMITMKIHPDKIREVIGKGGSTIQALTKETGTTIDIQEDGTITIASTSTDGMAEAKRRI. An S1 motif domain is found at 624–692; sequence GKIYAGTVLK…EKGRLRLSLK (69 aa). Residues 701–723 are disordered; the sequence is SISPINAGEAAAPAAPAEGSEQQ. Residues 707–723 show a composition bias toward low complexity; that stretch reads AGEAAAPAAPAEGSEQQ.

The protein belongs to the polyribonucleotide nucleotidyltransferase family. Requires Mg(2+) as cofactor.

The protein localises to the cytoplasm. The catalysed reaction is RNA(n+1) + phosphate = RNA(n) + a ribonucleoside 5'-diphosphate. Its function is as follows. Involved in mRNA degradation. Catalyzes the phosphorolysis of single-stranded polyribonucleotides processively in the 3'- to 5'-direction. This chain is Polyribonucleotide nucleotidyltransferase, found in Cupriavidus necator (strain ATCC 17699 / DSM 428 / KCTC 22496 / NCIMB 10442 / H16 / Stanier 337) (Ralstonia eutropha).